Reading from the N-terminus, the 118-residue chain is Large ribosomal subunit protein bL20 (118 aa).

It belongs to the bacterial ribosomal protein bL20 family.

Its function is as follows. Binds directly to 23S ribosomal RNA and is necessary for the in vitro assembly process of the 50S ribosomal subunit. It is not involved in the protein synthesizing functions of that subunit. This is Large ribosomal subunit protein bL20 from Caldicellulosiruptor saccharolyticus (strain ATCC 43494 / DSM 8903 / Tp8T 6331).